The chain runs to 140 residues: MAKKITGYIKLQVPAGKANPAPPIGPALGQHGVNIMEFCKAFNAKTQADEGTITPVVITVYADRSFTFVTKTPPASVLIKKALGIESGSSVPNKNKVGKLTKAQVQEIASKKMPDLNAASLEAAMKTIEGTARSMGVEIV.

It belongs to the universal ribosomal protein uL11 family. In terms of assembly, part of the ribosomal stalk of the 50S ribosomal subunit. Interacts with L10 and the large rRNA to form the base of the stalk. L10 forms an elongated spine to which L12 dimers bind in a sequential fashion forming a multimeric L10(L12)X complex. One or more lysine residues are methylated.

Functionally, forms part of the ribosomal stalk which helps the ribosome interact with GTP-bound translation factors. The sequence is that of Large ribosomal subunit protein uL11 from Geotalea daltonii (strain DSM 22248 / JCM 15807 / FRC-32) (Geobacter daltonii).